A 181-amino-acid polypeptide reads, in one-letter code: ADP-ribosylation factor 1 (181 aa).

Gly2 is lipidated: N-myristoyl glycine. GTP is bound by residues 24–31, 67–71, and 126–129; these read GLDAAGKT, DVGGQ, and NKQD.

This sequence belongs to the small GTPase superfamily. Arf family.

It is found in the golgi apparatus. The catalysed reaction is GTP + H2O = GDP + phosphate + H(+). Functionally, GTP-binding protein involved in protein trafficking; may modulate vesicle budding and uncoating within the Golgi apparatus. The sequence is that of ADP-ribosylation factor 1 (ARF1) from Chlamydomonas reinhardtii (Chlamydomonas smithii).